The following is a 354-amino-acid chain: Uroporphyrinogen decarboxylase (354 aa).

Residues 25-29, Asp-75, Tyr-152, Thr-207, and His-330 contribute to the substrate site; that span reads RQAGR.

This sequence belongs to the uroporphyrinogen decarboxylase family. As to quaternary structure, homodimer.

The protein resides in the cytoplasm. The enzyme catalyses uroporphyrinogen III + 4 H(+) = coproporphyrinogen III + 4 CO2. The protein operates within porphyrin-containing compound metabolism; protoporphyrin-IX biosynthesis; coproporphyrinogen-III from 5-aminolevulinate: step 4/4. In terms of biological role, catalyzes the decarboxylation of four acetate groups of uroporphyrinogen-III to yield coproporphyrinogen-III. The chain is Uroporphyrinogen decarboxylase from Xanthomonas oryzae pv. oryzae (strain MAFF 311018).